Consider the following 307-residue polypeptide: Ribosomal RNA small subunit methyltransferase H (307 aa).

S-adenosyl-L-methionine-binding positions include 33–35, Asp-51, Phe-78, Asp-96, and Gln-103; that span reads GGY.

This sequence belongs to the methyltransferase superfamily. RsmH family.

It localises to the cytoplasm. It catalyses the reaction cytidine(1402) in 16S rRNA + S-adenosyl-L-methionine = N(4)-methylcytidine(1402) in 16S rRNA + S-adenosyl-L-homocysteine + H(+). Specifically methylates the N4 position of cytidine in position 1402 (C1402) of 16S rRNA. This is Ribosomal RNA small subunit methyltransferase H from Rickettsia conorii (strain ATCC VR-613 / Malish 7).